The chain runs to 503 residues: Dentin matrix acidic phosphoprotein 1 (503 aa).

The signal sequence occupies residues 1–16 (MKTVILLVFLWGLSCA). Residues 23 to 35 (HNTESESSEERTG) are compositionally biased toward basic and acidic residues. The interval 23 to 503 (HNTESESSEE…QDDNDCQDGY (481 aa)) is disordered. A compositionally biased stretch (polar residues) spans 54 to 63 (QASPEGQANS). The span at 98–119 (KEDDEDDSGDDTFGDEDNDLGP) shows a compositional bias: acidic residues. The segment covering 138 to 150 (DTTQSSEDSTSQE) has biased composition (low complexity). Basic and acidic residues predominate over residues 158-175 (SDSKDHDSEDEADSRPEA). Positions 203-215 (SEFDDEGMQSDDP) are enriched in acidic residues. Basic and acidic residues-rich tracts occupy residues 233–243 (RSEESKGDHEP), 267–286 (HVSE…RETQ), and 293–303 (TASKEESRSES). The span at 332 to 348 (EPSQESSSESQEGVTSE) shows a compositional bias: low complexity. Residues 350–352 (RGD) carry the Cell attachment site motif. N356 carries an N-linked (GlcNAc...) asparagine glycan. A compositionally biased stretch (acidic residues) spans 362–373 (DQEDSESSEEDS). N394 is a glycosylation site (N-linked (GlcNAc...) asparagine). A compositionally biased stretch (polar residues) spans 407-418 (AQDGDSSSQEGL). Residues 419-435 (QSQSASTESRSQESQSE) show a composition bias toward low complexity. An N-linked (GlcNAc...) asparagine glycan is attached at N457. A compositionally biased stretch (basic and acidic residues) spans 467-492 (EDIRPKNMEADSRKLIVDAYHNKPIG). A compositionally biased stretch (acidic residues) spans 493–503 (DQDDNDCQDGY).

Interacts with importin alpha. Phosphorylated in the cytosol and extracellular matrix and unphosphorylated in the nucleus. Phosphorylation is necessary for nucleocytoplasmic transport and may be catalyzed by a nuclear isoform of CK2 and can be augmented by calcium. Phosphorylated (in vitro) by FAM20C in the extracellular medium at sites within the S-x-E/pS motif. As to expression, expressed in tooth particularly in odontoblast, ameloblast and cementoblast. Also expressed in bone particularly in osteoblast.

The protein localises to the nucleus. The protein resides in the cytoplasm. It localises to the secreted. It is found in the extracellular space. Its subcellular location is the extracellular matrix. Functionally, may have a dual function during osteoblast differentiation. In the nucleus of undifferentiated osteoblasts, unphosphorylated form acts as a transcriptional component for activation of osteoblast-specific genes like osteocalcin. During the osteoblast to osteocyte transition phase it is phosphorylated and exported into the extracellular matrix, where it regulates nucleation of hydroxyapatite. In Mus musculus (Mouse), this protein is Dentin matrix acidic phosphoprotein 1.